Reading from the N-terminus, the 397-residue chain is Succinate--CoA ligase [ADP-forming] subunit beta (397 aa).

An ATP-grasp domain is found at 9 to 254; it reads KALLKGYGAP…ETEEDAKEIE (246 aa). Residues Lys46, 53–55, Glu109, Ala112, and Glu117 contribute to the ATP site; that span reads GRG. Asn209 and Asp223 together coordinate Mg(2+). Residues Asn274 and 331–333 contribute to the substrate site; that span reads GIM.

The protein belongs to the succinate/malate CoA ligase beta subunit family. In terms of assembly, heterotetramer of two alpha and two beta subunits. It depends on Mg(2+) as a cofactor.

It carries out the reaction succinate + ATP + CoA = succinyl-CoA + ADP + phosphate. The enzyme catalyses GTP + succinate + CoA = succinyl-CoA + GDP + phosphate. It functions in the pathway carbohydrate metabolism; tricarboxylic acid cycle; succinate from succinyl-CoA (ligase route): step 1/1. In terms of biological role, succinyl-CoA synthetase functions in the citric acid cycle (TCA), coupling the hydrolysis of succinyl-CoA to the synthesis of either ATP or GTP and thus represents the only step of substrate-level phosphorylation in the TCA. The beta subunit provides nucleotide specificity of the enzyme and binds the substrate succinate, while the binding sites for coenzyme A and phosphate are found in the alpha subunit. This Rhizobium johnstonii (strain DSM 114642 / LMG 32736 / 3841) (Rhizobium leguminosarum bv. viciae) protein is Succinate--CoA ligase [ADP-forming] subunit beta.